The following is a 240-amino-acid chain: Glutathione S-transferase theta-1 (240 aa).

The GST N-terminal domain occupies 2–82 (GLELYLDLLS…YLARKYKVPD (81 aa)). Residues His40, 53–54 (KV), and 66–67 (ES) contribute to the glutathione site. In terms of domain architecture, GST C-terminal spans 88-226 (DLQACARVDE…AKDSQPADPT (139 aa)).

It belongs to the GST superfamily. Theta family. In terms of assembly, homodimer.

Its subcellular location is the cytoplasm. It catalyses the reaction RX + glutathione = an S-substituted glutathione + a halide anion + H(+). In terms of biological role, conjugation of reduced glutathione to a wide number of exogenous and endogenous hydrophobic electrophiles. Also binds steroids, bilirubin, carcinogens and numerous organic anions. Has dichloromethane dehalogenase activity. The chain is Glutathione S-transferase theta-1 (GSTT1) from Bos taurus (Bovine).